The following is a 329-amino-acid chain: DNA-directed RNA polymerase subunit alpha (329 aa).

The alpha N-terminal domain (alpha-NTD) stretch occupies residues 1–234 (MQGSVTEFLK…EQLDAFVELR (234 aa)). The alpha C-terminal domain (alpha-CTD) stretch occupies residues 248–329 (FDPILLRPVD…WPPASLADDL (82 aa)).

It belongs to the RNA polymerase alpha chain family. Homodimer. The RNAP catalytic core consists of 2 alpha, 1 beta, 1 beta' and 1 omega subunit. When a sigma factor is associated with the core the holoenzyme is formed, which can initiate transcription.

It carries out the reaction RNA(n) + a ribonucleoside 5'-triphosphate = RNA(n+1) + diphosphate. Its function is as follows. DNA-dependent RNA polymerase catalyzes the transcription of DNA into RNA using the four ribonucleoside triphosphates as substrates. The chain is DNA-directed RNA polymerase subunit alpha from Shewanella baltica (strain OS155 / ATCC BAA-1091).